The chain runs to 1002 residues: Lon protease homolog, mitochondrial (1002 aa).

The Lon N-terminal domain maps to Val-102–Met-313. Residue Gly-468 to Thr-475 coordinates ATP. A Lon proteolytic domain is found at Gln-811–Ser-995. Catalysis depends on residues Ser-901 and Lys-944.

Belongs to the peptidase S16 family. Homohexamer or homoheptamer. Organized in a ring with a central cavity.

The protein resides in the mitochondrion matrix. It catalyses the reaction Hydrolysis of proteins in presence of ATP.. In terms of biological role, ATP-dependent serine protease that mediates the selective degradation of misfolded, unassembled or oxidatively damaged polypeptides as well as certain short-lived regulatory proteins in the mitochondrial matrix. May also have a chaperone function in the assembly of inner membrane protein complexes. Participates in the regulation of mitochondrial gene expression and in the maintenance of the integrity of the mitochondrial genome. Binds to mitochondrial DNA in a site-specific manner. The sequence is that of Lon protease homolog, mitochondrial from Oryza sativa subsp. japonica (Rice).